The following is a 263-amino-acid chain: MKTLVVKCFLLLALVCSCRAADSIWQLCNTNSNISASSQVSKNIDSLLATLVSKTPSKGFKTTTSSSYNNKEKVYGLAQCRGDISNTDCSTCIQDAAKKIREVCQNQSDSRILYDFCFLRYSQENFIGKLDTGAGLIYFNVANVTEIDPKKFDNELGALFDKIRSEAVLPKNKGLGKGKTKLTPFVTLNGLVQCTRDLSELDCAQCFATAVGSFMTTCHNKKGCRVLYSSCYVRYEFYPFYFPLDPAKTGPSVGRISSVHLSP.

The N-terminal stretch at 1–20 (MKTLVVKCFLLLALVCSCRA) is a signal peptide. Gnk2-homologous domains are found at residues 22 to 126 (DSIW…QENF) and 132 to 240 (TGAG…FYPF).

It belongs to the cysteine-rich repeat secretory protein family.

Its subcellular location is the secreted. The chain is Cysteine-rich repeat secretory protein 55 (CRRSP55) from Arabidopsis thaliana (Mouse-ear cress).